The primary structure comprises 695 residues: D-(-)-3-hydroxybutyrate oligomer hydrolase (695 aa).

Positions 1 to 17 (MTTHGWGTRILLGAALA) are cleaved as a signal peptide. Catalysis depends on serine 308, which acts as the Charge relay system.

The protein belongs to the D-(-)-3-hydroxybutyrate oligomer hydrolase family.

It localises to the secreted. The catalysed reaction is (3R)-hydroxybutanoate dimer + H2O = 2 (R)-3-hydroxybutanoate + H(+). It functions in the pathway lipid metabolism; butanoate metabolism. Functionally, participates in the degradation of poly-3-hydroxybutyrate (PHB). It works downstream of poly(3-hydroxybutyrate) depolymerase, hydrolyzing D(-)-3-hydroxybutyrate oligomers of various length (3HB-oligomers) into 3HB-monomers. The polypeptide is D-(-)-3-hydroxybutyrate oligomer hydrolase (Burkholderia ambifaria (strain ATCC BAA-244 / DSM 16087 / CCUG 44356 / LMG 19182 / AMMD) (Burkholderia cepacia (strain AMMD))).